A 315-amino-acid chain; its full sequence is Ribosomal protein L11 methyltransferase (315 aa).

S-adenosyl-L-methionine contacts are provided by threonine 164, glycine 185, aspartate 207, and asparagine 249.

It belongs to the methyltransferase superfamily. PrmA family.

It is found in the cytoplasm. The catalysed reaction is L-lysyl-[protein] + 3 S-adenosyl-L-methionine = N(6),N(6),N(6)-trimethyl-L-lysyl-[protein] + 3 S-adenosyl-L-homocysteine + 3 H(+). Functionally, methylates ribosomal protein L11. In Lactobacillus johnsonii (strain CNCM I-12250 / La1 / NCC 533), this protein is Ribosomal protein L11 methyltransferase.